The chain runs to 191 residues: Probable nicotinate-nucleotide adenylyltransferase (191 aa).

Belongs to the NadD family.

The enzyme catalyses nicotinate beta-D-ribonucleotide + ATP + H(+) = deamido-NAD(+) + diphosphate. Its pathway is cofactor biosynthesis; NAD(+) biosynthesis; deamido-NAD(+) from nicotinate D-ribonucleotide: step 1/1. Its function is as follows. Catalyzes the reversible adenylation of nicotinate mononucleotide (NaMN) to nicotinic acid adenine dinucleotide (NaAD). The protein is Probable nicotinate-nucleotide adenylyltransferase of Oceanobacillus iheyensis (strain DSM 14371 / CIP 107618 / JCM 11309 / KCTC 3954 / HTE831).